Here is a 276-residue protein sequence, read N- to C-terminus: Golgi apparatus membrane protein TVP23 homolog C (276 aa).

Met-1 carries the N-acetylmethionine modification. The interval 1–21 (MLQQDSNDDTEDVSLFDAEEE) is disordered. A run of 2 helical transmembrane segments spans residues 52-72 (LLCE…ILLL) and 126-146 (IFWL…FSAL). Residues 254-276 (GESPNSRGTGEPGPKFHLASGMH) form a disordered region.

The protein belongs to the TVP23 family.

Its subcellular location is the membrane. The chain is Golgi apparatus membrane protein TVP23 homolog C (TVP23C) from Homo sapiens (Human).